The chain runs to 130 residues: Small ribosomal subunit protein uS9 (130 aa).

The protein belongs to the universal ribosomal protein uS9 family.

This Caldicellulosiruptor bescii (strain ATCC BAA-1888 / DSM 6725 / KCTC 15123 / Z-1320) (Anaerocellum thermophilum) protein is Small ribosomal subunit protein uS9.